The following is a 148-amino-acid chain: Cytochrome c-552 (148 aa).

The first 17 residues, 1–17, serve as a signal peptide directing secretion; sequence MKRTLMAFLLLGGLALA. The residue at position 18 (glutamine 18) is a Pyrrolidone carboxylic acid. Residues cysteine 28, cysteine 31, histidine 32, and methionine 86 each coordinate heme c.

Binds 1 heme c group covalently per subunit.

Its function is as follows. This monoheme basic protein appears to function as an electron donor to cytochrome oxidase in T.thermophilus. This Thermus thermophilus (strain ATCC 27634 / DSM 579 / HB8) protein is Cytochrome c-552 (cycA).